We begin with the raw amino-acid sequence, 266 residues long: MACHTGNRRFPSVEELSLGMAQMTLLGTPVSSGTFDSVETLADRMGELKINDKSKVAGLTSVWVASRYNPFQGGALFKSHLRCNSLKKIIYRTDRNKCVKTAKVYLDRGGPPQAEDWEKLFECAIGLLAKQDWGDSQFREETALRLVVAAGGGVKRDACSAGTGGTEEGDSDTEEEPLEKVMERATKRIIEETARLSKRRRPEALEAALELRDSFKILSAQGGPFSKLSKDEKTRWVTAFSKCLQPILDLNEGRLLYDYVKQVGSK.

Residues 158–177 (ACSAGTGGTEEGDSDTEEEP) are disordered. Residues 167–177 (EEGDSDTEEEP) show a composition bias toward acidic residues.

The protein resides in the virion. May play a role in virion budding and release by binding the ribonucleocapsid and the host membrane. This chain is Probable matrix protein, found in Ixodidae (hardbacked ticks).